Consider the following 1069-residue polypeptide: Acyl-CoA dehydrogenase family member 10 (1069 aa).

Residue Lys-413 is modified to N6-succinyllysine. Lys-427 is subject to N6-acetyllysine; alternate. Lys-427 carries the post-translational modification N6-succinyllysine; alternate. Residues 792–802 (FAMTEPQVASS), Ser-828, Arg-943, Gln-1013, and Glu-1044 each bind FAD. Lys-1052 is subject to N6-acetyllysine; alternate. N6-succinyllysine; alternate is present on Lys-1052.

This sequence belongs to the acyl-CoA dehydrogenase family. It depends on FAD as a cofactor.

The catalysed reaction is a 2,3-saturated acyl-CoA + A = a 2,3-dehydroacyl-CoA + AH2. Its function is as follows. Acyl-CoA dehydrogenase only active with R- and S-2-methyl-C15-CoA. The sequence is that of Acyl-CoA dehydrogenase family member 10 (Acad10) from Mus musculus (Mouse).